The sequence spans 1166 residues: ATP-dependent helicase/deoxyribonuclease subunit B (1166 aa).

The UvrD-like helicase ATP-binding domain occupies 1 to 278; sequence MGAEFLVGRS…LNLDITYKEL (278 aa). S10, G11, K14, T15, K16, T236, and R283 together coordinate ATP. The region spanning 281–586 is the UvrD-like helicase C-terminal domain; that stretch reads TERHTKTPEL…TFSLIPPALD (306 aa). 4 residues coordinate [4Fe-4S] cluster: C801, C1121, C1124, and C1130.

This sequence belongs to the helicase family. AddB/RexB type 1 subfamily. In terms of assembly, heterodimer of AddA and AddB. At low magnesium concentrations there is no nuclease activity, but helicase activity is unaffected. is required as a cofactor. Requires Mg(2+) as cofactor. It depends on [4Fe-4S] cluster as a cofactor.

The heterodimer acts both as a highly processive, ATP-dependent DNA helicase and as an ATP-dependent single-stranded exonuclease, acting in both directions. Recognizes the B.subtilis Chi site (5'-AGCGG-3') which transforms the enzyme from a helicase which degrades both DNA strands to one with only 5' to 3' exonuclease activity. This generates a double-stranded DNA with a protruding 3'-terminated single-stranded tail suitable for the initiation of homologous recombination (Chi fragment). The AddB nuclease domain is not required for Chi fragment generation but for recognition of the Chi site; this subunit has 5' -&gt; 3' nuclease activity but no helicase activity. The helicase activity of isolated AddA acts on 3'-tailed substrate and requires AddB to bind to blunt-ended DNA. RecA thread formation during DNA double-strand break repair requires RecJ or AddAB. In Bacillus subtilis (strain 168), this protein is ATP-dependent helicase/deoxyribonuclease subunit B.